Here is a 377-residue protein sequence, read N- to C-terminus: Guanine nucleotide-binding protein subunit beta-2 (377 aa).

WD repeat units follow at residues 63–93, 105–135, 154–185, 202–233, 246–276, 293–323, and 339–369; these read GHTG…IVWN, LPCA…SIFN, GHKG…VLWD, GHTA…RLWD, GHEG…RLFD, GDIP…YVWD, and SHEG…KIWA.

It belongs to the WD repeat G protein beta family. G proteins are composed of 3 units, alpha, beta and gamma.

Functionally, guanine nucleotide-binding proteins (G proteins) are involved as a modulator or transducer in various transmembrane signaling systems. The beta and gamma chains are required for the GTPase activity, for replacement of GDP by GTP, and for G protein-effector interaction. The chain is Guanine nucleotide-binding protein subunit beta-2 from Nicotiana tabacum (Common tobacco).